Here is a 246-residue protein sequence, read N- to C-terminus: Pyridoxine 5'-phosphate synthase (246 aa).

3-amino-2-oxopropyl phosphate contacts are provided by Asn8 and Arg19. His44 acts as the Proton acceptor in catalysis. Residues Arg46 and His51 each coordinate 1-deoxy-D-xylulose 5-phosphate. The active-site Proton acceptor is the Glu76. Thr106 is a 1-deoxy-D-xylulose 5-phosphate binding site. His198 acts as the Proton donor in catalysis. Residues Asp199 and 221 to 222 contribute to the 3-amino-2-oxopropyl phosphate site; that span reads GH.

It belongs to the PNP synthase family. As to quaternary structure, homooctamer; tetramer of dimers.

It is found in the cytoplasm. The catalysed reaction is 3-amino-2-oxopropyl phosphate + 1-deoxy-D-xylulose 5-phosphate = pyridoxine 5'-phosphate + phosphate + 2 H2O + H(+). Its pathway is cofactor biosynthesis; pyridoxine 5'-phosphate biosynthesis; pyridoxine 5'-phosphate from D-erythrose 4-phosphate: step 5/5. In terms of biological role, catalyzes the complicated ring closure reaction between the two acyclic compounds 1-deoxy-D-xylulose-5-phosphate (DXP) and 3-amino-2-oxopropyl phosphate (1-amino-acetone-3-phosphate or AAP) to form pyridoxine 5'-phosphate (PNP) and inorganic phosphate. This Brucella abortus (strain S19) protein is Pyridoxine 5'-phosphate synthase.